We begin with the raw amino-acid sequence, 147 residues long: Large ribosomal subunit protein uL16 (147 aa).

It belongs to the universal ribosomal protein uL16 family. Part of the 50S ribosomal subunit.

Binds 23S rRNA and is also seen to make contacts with the A and possibly P site tRNAs. This Finegoldia magna (strain ATCC 29328 / DSM 20472 / WAL 2508) (Peptostreptococcus magnus) protein is Large ribosomal subunit protein uL16.